A 256-amino-acid polypeptide reads, in one-letter code: 1-(5-phosphoribosyl)-5-[(5-phosphoribosylamino)methylideneamino] imidazole-4-carboxamide isomerase (256 aa).

The Proton acceptor role is filled by D9. Catalysis depends on D130, which acts as the Proton donor.

Belongs to the HisA/HisF family.

It is found in the cytoplasm. The enzyme catalyses 1-(5-phospho-beta-D-ribosyl)-5-[(5-phospho-beta-D-ribosylamino)methylideneamino]imidazole-4-carboxamide = 5-[(5-phospho-1-deoxy-D-ribulos-1-ylimino)methylamino]-1-(5-phospho-beta-D-ribosyl)imidazole-4-carboxamide. Its pathway is amino-acid biosynthesis; L-histidine biosynthesis; L-histidine from 5-phospho-alpha-D-ribose 1-diphosphate: step 4/9. The sequence is that of 1-(5-phosphoribosyl)-5-[(5-phosphoribosylamino)methylideneamino] imidazole-4-carboxamide isomerase from Prochlorococcus marinus (strain SARG / CCMP1375 / SS120).